The sequence spans 220 residues: Deoxyribose-phosphate aldolase (220 aa).

Asp-92 functions as the Proton donor/acceptor in the catalytic mechanism. Lys-155 functions as the Schiff-base intermediate with acetaldehyde in the catalytic mechanism. Residue Lys-184 is the Proton donor/acceptor of the active site.

This sequence belongs to the DeoC/FbaB aldolase family. DeoC type 1 subfamily.

It is found in the cytoplasm. The enzyme catalyses 2-deoxy-D-ribose 5-phosphate = D-glyceraldehyde 3-phosphate + acetaldehyde. Its pathway is carbohydrate degradation; 2-deoxy-D-ribose 1-phosphate degradation; D-glyceraldehyde 3-phosphate and acetaldehyde from 2-deoxy-alpha-D-ribose 1-phosphate: step 2/2. Its function is as follows. Catalyzes a reversible aldol reaction between acetaldehyde and D-glyceraldehyde 3-phosphate to generate 2-deoxy-D-ribose 5-phosphate. This chain is Deoxyribose-phosphate aldolase, found in Symbiobacterium thermophilum (strain DSM 24528 / JCM 14929 / IAM 14863 / T).